A 1364-amino-acid chain; its full sequence is Condensin complex subunit 1 (1364 aa).

The interval 1–588 (MTFHFHIPLA…AQVNPTSEEL (588 aa)) is interaction with XCAP-E and XCAP-C. Residues 567–577 (DLEQPTTKDQD) are compositionally biased toward basic and acidic residues. 2 disordered regions span residues 567–596 (DLEQPTTKDQDDAQVNPTSEELPSQEVQNS) and 1273–1364 (LENM…SRAK). The span at 579–596 (AQVNPTSEELPSQEVQNS) shows a compositional bias: polar residues. A Phosphothreonine; by CDK1 modification is found at threonine 1314. Positions 1317 to 1326 (PPASRKSRRK) match the Bipartite nuclear localization signal motif. Over residues 1333 to 1345 (SDEESDLEAELSE) the composition is skewed to acidic residues. Phosphothreonine; by CDK1 is present on residues threonine 1348 and threonine 1353.

This sequence belongs to the CND1 (condensin subunit 1) family. As to quaternary structure, component of the condensin complex, which contains the XCAP-E/SMC2 and XCAP-C/SMC4 heterodimer, and three non SMC subunits that probably regulate the complex: XCAP-H/NCAPH, XCAP-D2/NCAPD2 and XCAP-G/NCAPG. In terms of processing, phosphorylated by CDK1. Its phosphorylation, as well as that of XCAP-H and XCAP-G subunits, activates the condensin complex and is required for chromosome condensation.

The protein localises to the nucleus. It localises to the cytoplasm. The protein resides in the chromosome. Its function is as follows. Regulatory subunit of the condensin complex, a complex required for conversion of interphase chromatin into mitotic-like condense chromosomes. The condensin complex probably introduces positive supercoils into relaxed DNA in the presence of type I topoisomerases and converts nicked DNA into positive knotted forms in the presence of type II topoisomerases. May target the condensin complex to DNA via its C-terminal domain. This chain is Condensin complex subunit 1 (ncapd2), found in Xenopus laevis (African clawed frog).